A 465-amino-acid polypeptide reads, in one-letter code: Phosphatidate cytidylyltransferase (465 aa).

Residues 1–60 form a disordered region; sequence MSDQPPAENADVRQRRAPESPVTERLRAPARDDARPTSDESDMEGILQDEDSDAGSKNKE. A compositionally biased stretch (basic and acidic residues) spans 10–38; that stretch reads ADVRQRRAPESPVTERLRAPARDDARPTS. A compositionally biased stretch (acidic residues) spans 39 to 53; it reads DESDMEGILQDEDSD. The next 8 helical transmembrane spans lie at 95 to 117, 121 to 143, 158 to 178, 187 to 207, 214 to 234, 239 to 259, 288 to 308, and 367 to 387; these read WVVRGLFSIIMISTFTFIVTRGA, MFLVFLIQFKCFQEIISIGLAVY, FLLTSNYFFFGESLIDYWGIV, FLVAYHRLVSFALYCIGFVSF, GYYMRQFSLFAWTHLTLLLIV, FIIQNIFQGLIWFLAPVAMII, GFIGGAFSTVVFGILLSLALY, and IALSLFASILGPFGGFFASGF.

This sequence belongs to the CDS family.

The protein localises to the membrane. It carries out the reaction a 1,2-diacyl-sn-glycero-3-phosphate + CTP + H(+) = a CDP-1,2-diacyl-sn-glycerol + diphosphate. The protein operates within phospholipid metabolism; CDP-diacylglycerol biosynthesis; CDP-diacylglycerol from sn-glycerol 3-phosphate: step 3/3. In terms of biological role, provides CDP-diacylglycerol, an important precursor for the synthesis of phosphatidylinositol (PtdIns). The polypeptide is Phosphatidate cytidylyltransferase (cdgs-1) (Caenorhabditis elegans).